The chain runs to 789 residues: DNA replication helicase (789 aa).

Residue 64–71 participates in ATP binding; that stretch reads GTAGAGKS.

Belongs to the herpesviridae helicase family. As to quaternary structure, associates with the primase and the primase-associated factor to form the helicase-primase complex.

Its subcellular location is the host nucleus. Functionally, component of the helicase/primase complex. Unwinds the DNA at the replication forks and generates single-stranded DNA for both leading and lagging strand synthesis. The primase synthesizes short RNA primers on the lagging strand that the polymerase elongates using dNTPs. Possesses helicase-like motifs and therefore may act as the helicase subunit of the complex. The chain is DNA replication helicase from Equus caballus (Horse).